A 43-amino-acid polypeptide reads, in one-letter code: Parvalbumin beta (43 aa).

2 EF-hand domains span residues 1–20 (KVFE…LKLF) and 22–43 (LSSA…ALVK). Positions 7, 9, 11, 12, 14, 16, and 37 each coordinate Ca(2+).

In terms of tissue distribution, detected in muscle and cutaneous mucus. In the skin, detected in cells in the basal region of the glandular epithelium of the dermal mucus glands (at protein level).

It localises to the cytoplasm. The protein localises to the secreted. In terms of biological role, in muscle, parvalbumin is thought to be involved in relaxation after contraction. It binds two calcium ions. In Rana temporaria (European common frog), this protein is Parvalbumin beta.